A 527-amino-acid polypeptide reads, in one-letter code: Glutamate--cysteine ligase (527 aa).

The protein belongs to the glutamate--cysteine ligase type 1 family. Type 1 subfamily.

It carries out the reaction L-cysteine + L-glutamate + ATP = gamma-L-glutamyl-L-cysteine + ADP + phosphate + H(+). It functions in the pathway sulfur metabolism; glutathione biosynthesis; glutathione from L-cysteine and L-glutamate: step 1/2. This chain is Glutamate--cysteine ligase, found in Pseudomonas aeruginosa (strain UCBPP-PA14).